Here is a 206-residue protein sequence, read N- to C-terminus: Dephospho-CoA kinase (206 aa).

Residues 6 to 206 form the DPCK domain; that stretch reads IIGLTGGIAS…KWKWKDWSKK (201 aa). 14–19 lines the ATP pocket; it reads ASGKST.

This sequence belongs to the CoaE family.

The protein resides in the cytoplasm. The catalysed reaction is 3'-dephospho-CoA + ATP = ADP + CoA + H(+). The protein operates within cofactor biosynthesis; coenzyme A biosynthesis; CoA from (R)-pantothenate: step 5/5. Its function is as follows. Catalyzes the phosphorylation of the 3'-hydroxyl group of dephosphocoenzyme A to form coenzyme A. This is Dephospho-CoA kinase from Carboxydothermus hydrogenoformans (strain ATCC BAA-161 / DSM 6008 / Z-2901).